We begin with the raw amino-acid sequence, 185 residues long: Ribosome-recycling factor (185 aa).

It belongs to the RRF family.

It is found in the cytoplasm. Functionally, responsible for the release of ribosomes from messenger RNA at the termination of protein biosynthesis. May increase the efficiency of translation by recycling ribosomes from one round of translation to another. The chain is Ribosome-recycling factor from Xylella fastidiosa (strain Temecula1 / ATCC 700964).